We begin with the raw amino-acid sequence, 100 residues long: Urease subunit gamma (100 aa).

It belongs to the urease gamma subunit family. As to quaternary structure, heterotrimer of UreA (gamma), UreB (beta) and UreC (alpha) subunits. Three heterotrimers associate to form the active enzyme.

Its subcellular location is the cytoplasm. The catalysed reaction is urea + 2 H2O + H(+) = hydrogencarbonate + 2 NH4(+). Its pathway is nitrogen metabolism; urea degradation; CO(2) and NH(3) from urea (urease route): step 1/1. This chain is Urease subunit gamma, found in Corynebacterium glutamicum (strain R).